The primary structure comprises 490 residues: Katanin p60 ATPase-containing subunit A-like 1 (490 aa).

Met-1 is modified (N-acetylmethionine). The segment at Asp-95–Ala-184 is disordered. Over residues Pro-116–Met-127 the composition is skewed to basic and acidic residues. Residues Ala-128–Ala-139 are compositionally biased toward low complexity. Basic and acidic residues predominate over residues Ser-143 to Met-169. Ser-174 is modified (phosphoserine). Gly-248–Thr-255 is an ATP binding site.

The protein belongs to the AAA ATPase family. Katanin p60 subunit A1 subfamily. A-like 1 sub-subfamily. As to quaternary structure, interacts with KATNB1 and KATNBL1.

It is found in the cytoplasm. The protein resides in the cytoskeleton. It localises to the spindle pole. The protein localises to the spindle. The catalysed reaction is n ATP + n H2O + a microtubule = n ADP + n phosphate + (n+1) alpha/beta tubulin heterodimers.. Its function is as follows. Regulates microtubule dynamics in Sertoli cells, a process that is essential for spermiogenesis and male fertility. Severs microtubules in an ATP-dependent manner, promoting rapid reorganization of cellular microtubule arrays. Has microtubule-severing activity in vitro. This chain is Katanin p60 ATPase-containing subunit A-like 1, found in Papio anubis (Olive baboon).